A 373-amino-acid chain; its full sequence is Putative citrate synthase 2 (373 aa).

Active-site residues include histidine 250 and glutamate 303.

The protein belongs to the citrate synthase family.

It catalyses the reaction oxaloacetate + acetyl-CoA + H2O = citrate + CoA + H(+). The protein operates within carbohydrate metabolism; tricarboxylic acid cycle; isocitrate from oxaloacetate: step 1/2. The polypeptide is Putative citrate synthase 2 (citA) (Mycobacterium bovis (strain ATCC BAA-935 / AF2122/97)).